We begin with the raw amino-acid sequence, 718 residues long: DNA ligase (718 aa).

NAD(+)-binding positions include 44 to 48 (DADYD), 93 to 94 (SL), and E127. The N6-AMP-lysine intermediate role is filled by K129. NAD(+)-binding residues include R150, E186, K302, and K326. Zn(2+) contacts are provided by C432, C435, C456, and C462. The BRCT domain maps to 640–718 (TAGSPVAGKT…EDEWLALISG (79 aa)).

It belongs to the NAD-dependent DNA ligase family. LigA subfamily. Requires Mg(2+) as cofactor. Mn(2+) is required as a cofactor.

The catalysed reaction is NAD(+) + (deoxyribonucleotide)n-3'-hydroxyl + 5'-phospho-(deoxyribonucleotide)m = (deoxyribonucleotide)n+m + AMP + beta-nicotinamide D-nucleotide.. DNA ligase that catalyzes the formation of phosphodiester linkages between 5'-phosphoryl and 3'-hydroxyl groups in double-stranded DNA using NAD as a coenzyme and as the energy source for the reaction. It is essential for DNA replication and repair of damaged DNA. This chain is DNA ligase, found in Rhizobium etli (strain ATCC 51251 / DSM 11541 / JCM 21823 / NBRC 15573 / CFN 42).